Consider the following 451-residue polypeptide: Magnesium transporter MgtE (451 aa).

Topologically, residues 1-285 (MVQNMTYDEL…TKAYVAAYRR (285 aa)) are cytoplasmic. Residues Asp-64 and Asp-96 each contribute to the Mg(2+) site. CBS domains are found at residues 140–203 (MTNR…VQDL) and 204–260 (MFTR…EADE). Residues Glu-218, Asp-228, Asp-249, Asp-252, Glu-257, Glu-260, and Asp-261 each contribute to the Mg(2+) site. Residues 286 to 306 (LPWLILLLFIGLISGSIISYF) traverse the membrane as a helical segment. The Extracellular segment spans residues 307–311 (EDALK). A helical transmembrane segment spans residues 312–332 (QVVALAFFMPMVSGMTGNTGT). Residues 333–371 (QSLAVVIRGLSKEEMNKKTIVRLIFREFRTSIFIGAVCS) are Cytoplasmic-facing. 2 consecutive transmembrane segments (helical) span residues 372 to 392 (VLIAIVSIIWQGNALLGFVVA) and 393 to 413 (SSLFLTLIIGTMSGTIIPIIL). At 414–427 (HKLKVDPAIASGPL) the chain is on the cytoplasmic side. The Mg(2+) site is built by Asp-419 and Asp-433. A helical transmembrane segment spans residues 428-448 (ITTLNDILSLLIYFGIATAFI). Residues 449 to 451 (HSL) lie on the Extracellular side of the membrane.

This sequence belongs to the SLC41A transporter family. In terms of assembly, homodimer.

It localises to the cell membrane. It catalyses the reaction Mg(2+)(in) = Mg(2+)(out). Binds cyclic di-AMP (c-di-AMP), which may regulate the transporter activity. In terms of biological role, acts as a magnesium transporter. MgtE is the dominant transporter under rich-medium growth conditions, and it may provide the primary route of magnesium import in B.subtilis, while the other putative transport proteins are likely to be utilized for more-specialized growth conditions. This is Magnesium transporter MgtE from Bacillus subtilis (strain 168).